Here is a 38-residue protein sequence, read N- to C-terminus: Defensin-like peptide 3 (38 aa).

Intrachain disulfides connect cysteine 6-cysteine 36 and cysteine 13-cysteine 29.

Produced by the crural gland and detected in venom from the spur located on each male hind leg.

The protein localises to the secreted. Its function is as follows. Does not show antimicrobial, myotoxic, hemolytic and cell-promoting activities. This Ornithorhynchus anatinus (Duckbill platypus) protein is Defensin-like peptide 3.